Reading from the N-terminus, the 297-residue chain is Phosphatidylglycerol--prolipoprotein diacylglyceryl transferase (297 aa).

4 helical membrane-spanning segments follow: residues Phe20–Val40, Glu57–Phe77, Ala105–Ile125, and Ile133–Gly153. Arg154 lines the a 1,2-diacyl-sn-glycero-3-phospho-(1'-sn-glycerol) pocket. Helical transmembrane passes span Pro193 to Phe213, Gly225 to Leu245, and Ala266 to Leu286.

It belongs to the Lgt family.

It is found in the cell inner membrane. The enzyme catalyses L-cysteinyl-[prolipoprotein] + a 1,2-diacyl-sn-glycero-3-phospho-(1'-sn-glycerol) = an S-1,2-diacyl-sn-glyceryl-L-cysteinyl-[prolipoprotein] + sn-glycerol 1-phosphate + H(+). The protein operates within protein modification; lipoprotein biosynthesis (diacylglyceryl transfer). Its function is as follows. Catalyzes the transfer of the diacylglyceryl group from phosphatidylglycerol to the sulfhydryl group of the N-terminal cysteine of a prolipoprotein, the first step in the formation of mature lipoproteins. This is Phosphatidylglycerol--prolipoprotein diacylglyceryl transferase from Prochlorococcus marinus (strain MIT 9215).